The primary structure comprises 294 residues: 33 kDa chaperonin (294 aa).

2 disulfide bridges follow: Cys-236–Cys-238 and Cys-269–Cys-272.

Belongs to the HSP33 family. Under oxidizing conditions two disulfide bonds are formed involving the reactive cysteines. Under reducing conditions zinc is bound to the reactive cysteines and the protein is inactive.

The protein localises to the cytoplasm. Its function is as follows. Redox regulated molecular chaperone. Protects both thermally unfolding and oxidatively damaged proteins from irreversible aggregation. Plays an important role in the bacterial defense system toward oxidative stress. The protein is 33 kDa chaperonin of Desulfotalea psychrophila (strain LSv54 / DSM 12343).